The sequence spans 689 residues: Protein CFAP20DC (689 aa).

5 disordered regions span residues 143-179 (GPPPLSGRRSNMRISSETVRSVGSKNNRSCQPSTVEK), 217-236 (LPIMHPHPPQEPSADKNNNR), 241-262 (LKSTSRERTETPSGNSSGNNTN), 333-424 (SKES…PSEL), and 583-660 (SIST…LSVE). Residues 150–176 (RRSNMRISSETVRSVGSKNNRSCQPST) are compositionally biased toward polar residues. The span at 343 to 359 (EESQSVPKDIFTFSSRP) shows a compositional bias: polar residues. Over residues 394-405 (SEDDFYGGDSSE) the composition is skewed to acidic residues. Polar residues predominate over residues 411–421 (IQGSRGPTTGP). Over residues 583 to 593 (SISTSSDDTTT) the composition is skewed to low complexity.

This is Protein CFAP20DC (CFAP20DC) from Macaca fascicularis (Crab-eating macaque).